Consider the following 485-residue polypeptide: Cysteine--tRNA ligase (485 aa).

Cysteine 27 provides a ligand contact to Zn(2+). Residues 29 to 39 (ITAYDLCHIGH) carry the 'HIGH' region motif. Positions 208, 233, and 237 each coordinate Zn(2+). The 'KMSKS' region signature appears at 265–269 (KMSKS). Lysine 268 contributes to the ATP binding site.

The protein belongs to the class-I aminoacyl-tRNA synthetase family. Monomer. Requires Zn(2+) as cofactor.

The protein resides in the cytoplasm. It carries out the reaction tRNA(Cys) + L-cysteine + ATP = L-cysteinyl-tRNA(Cys) + AMP + diphosphate. The protein is Cysteine--tRNA ligase of Solidesulfovibrio magneticus (strain ATCC 700980 / DSM 13731 / RS-1) (Desulfovibrio magneticus).